The primary structure comprises 397 residues: MLRWLCLYSALCALTHGSSARSLEWFTALVRTEYTEPLTNSSVTGSTESGRYGDSSPKESVKGFVGYPRDPWQLEGCHPDTQYIVPGTSAAAAAGPDSEWTQPWIALVARGGCTFKEKVFNAANRGASAVVIYNEAKSGNATVSMSHLGTGNTVVIMVSYPKGMEIMEPLRRDIPVKMVITVGTRHVQEFISGQSVVFVAIAFITMMIISLAWLIFYYIQRFLYTGAQCGNQSNRKETKKAISQLQLHRVKKGEKGIDIDAENCAVCIENYKTKDLVRILPCKHIFHRLCIDPWLIEHRTCPMCKLDVIKALGFWVEPEETLDIHVPDSIAGSSLSIGTVSITQEESRSEGNNLPSSSTGSSLQQSNSVKDDAGETTALLDDPGNDNAAATHTQDSH.

An N-terminal signal peptide occupies residues 1–20; the sequence is MLRWLCLYSALCALTHGSSA. The span at 39–49 shows a compositional bias: polar residues; sequence TNSSVTGSTES. The segment at 39 to 60 is disordered; that stretch reads TNSSVTGSTESGRYGDSSPKES. Residues Asn-40 and Asn-140 are each glycosylated (N-linked (GlcNAc...) asparagine). The 88-residue stretch at 83–170 folds into the PA domain; that stretch reads YIVPGTSAAA…PKGMEIMEPL (88 aa). Residues 196-216 traverse the membrane as a helical segment; sequence VVFVAIAFITMMIISLAWLIF. The N-linked (GlcNAc...) asparagine glycan is linked to Asn-231. The RING-type; atypical zinc-finger motif lies at 264 to 305; it reads CAVCIENYKTKDLVRILPCKHIFHRLCIDPWLIEHRTCPMCK. Positions 341 to 397 are disordered; the sequence is SITQEESRSEGNNLPSSSTGSSLQQSNSVKDDAGETTALLDDPGNDNAAATHTQDSH. Residues 351-368 are compositionally biased toward low complexity; that stretch reads GNNLPSSSTGSSLQQSNS. A compositionally biased stretch (polar residues) spans 388-397; sequence AAATHTQDSH.

It localises to the membrane. It catalyses the reaction S-ubiquitinyl-[E2 ubiquitin-conjugating enzyme]-L-cysteine + [acceptor protein]-L-lysine = [E2 ubiquitin-conjugating enzyme]-L-cysteine + N(6)-ubiquitinyl-[acceptor protein]-L-lysine.. The protein operates within protein modification; protein ubiquitination. E3 ubiquitin-protein ligase. Ubiquitinates BRAF, inducing its proteasomal degradation. This chain is E3 ubiquitin-protein ligase RNF149 (rnf149), found in Xenopus laevis (African clawed frog).